The following is a 262-amino-acid chain: Taurine import ATP-binding protein TauB (262 aa).

In terms of domain architecture, ABC transporter spans 4 to 233 (LELERISAQY…RYAAGESARA (230 aa)). An ATP-binding site is contributed by 38–45 (GPSGSGKT).

This sequence belongs to the ABC transporter superfamily. Taurine importer (TC 3.A.1.17.1) family. In terms of assembly, the complex is composed of two ATP-binding proteins (TauB), two transmembrane proteins (TauC) and a solute-binding protein (TauA).

The protein resides in the cell inner membrane. The catalysed reaction is taurine(out) + ATP + H2O = taurine(in) + ADP + phosphate + H(+). In terms of biological role, part of the ABC transporter complex TauABC involved in taurine import. Responsible for energy coupling to the transport system. This is Taurine import ATP-binding protein TauB from Pseudomonas putida (strain ATCC 47054 / DSM 6125 / CFBP 8728 / NCIMB 11950 / KT2440).